The following is a 304-amino-acid chain: tRNA-uridine aminocarboxypropyltransferase 1 (304 aa).

Residue S2 is modified to N-acetylserine. The DXTW motif lies at 206 to 209 (DSTW).

Belongs to the TDD superfamily. DTWD1 family.

It is found in the nucleus. The enzyme catalyses a uridine in tRNA + S-adenosyl-L-methionine = a 3-[(3S)-3-amino-3-carboxypropyl]uridine in tRNA + S-methyl-5'-thioadenosine + H(+). Catalyzes the formation of 3-(3-amino-3-carboxypropyl)uridine (acp3U) at position 20 in the D-loop of several cytoplasmic tRNAs (acp3U(20)). The chain is tRNA-uridine aminocarboxypropyltransferase 1 from Homo sapiens (Human).